We begin with the raw amino-acid sequence, 207 residues long: LexA repressor (207 aa).

A DNA-binding region (H-T-H motif) is located at residues 28-48 (VREIGEAVGLASSSTVHGHLA). Residues serine 129 and lysine 167 each act as for autocatalytic cleavage activity in the active site.

This sequence belongs to the peptidase S24 family. Homodimer.

It carries out the reaction Hydrolysis of Ala-|-Gly bond in repressor LexA.. Its function is as follows. Represses a number of genes involved in the response to DNA damage (SOS response), including recA and lexA. In the presence of single-stranded DNA, RecA interacts with LexA causing an autocatalytic cleavage which disrupts the DNA-binding part of LexA, leading to derepression of the SOS regulon and eventually DNA repair. In Geobacillus sp. (strain WCH70), this protein is LexA repressor.